A 252-amino-acid polypeptide reads, in one-letter code: Ubiquitin carboxyl-terminal hydrolase isozyme L1 (252 aa).

At Met1 the chain carries N-acetylmethionine. The UCH catalytic domain occupies 2–250 (QLKPMEINPE…VRFSAVALCK (249 aa)). The interval 5–10 (PMEINP) is interaction with ubiquitin. Cys119 functions as the Nucleophile in the catalytic mechanism. Ser154 is subject to Phosphoserine. His190 acts as the Proton donor in catalysis. The tract at residues 240–245 (EVRFSA) is interaction with ubiquitin. Cys249 carries S-farnesyl cysteine lipidation. The propeptide at 250–252 (KAA) is removed in mature form.

The protein belongs to the peptidase C12 family. In terms of assembly, monomer. Homodimer. Interacts with COPS5 and SNCA. In terms of processing, O-glycosylated. As to expression, neurons and cells of the diffuse neuroendocrine system and their tumors.

It localises to the cytoplasm. The protein resides in the endoplasmic reticulum membrane. The enzyme catalyses Thiol-dependent hydrolysis of ester, thioester, amide, peptide and isopeptide bonds formed by the C-terminal Gly of ubiquitin (a 76-residue protein attached to proteins as an intracellular targeting signal).. Its function is as follows. Ubiquitin-protein hydrolase involved both in the processing of ubiquitin precursors and of ubiquitinated proteins. This enzyme is a thiol protease that recognizes and hydrolyzes a peptide bond at the C-terminal glycine of ubiquitin. Also binds to free monoubiquitin and may prevent its degradation in lysosomes. The homodimer may have ATP-independent ubiquitin ligase activity. The chain is Ubiquitin carboxyl-terminal hydrolase isozyme L1 (UCHL1) from Bos taurus (Bovine).